The sequence spans 74 residues: Small integral membrane protein 15 (74 aa).

The chain crosses the membrane as a helical span at residues 20–40; it reads YGFLTTVILALTPLFLASAVL. Residues 42 to 74 adopt a coiled-coil conformation; that stretch reads WKLAKMIEAREKEQKKKQKRQENIAKAKRLKKD. Basic and acidic residues predominate over residues 55–66; that stretch reads QKKKQKRQENIA. Positions 55–74 are disordered; that stretch reads QKKKQKRQENIAKAKRLKKD.

Belongs to the SMIM15 family.

The protein resides in the membrane. In Homo sapiens (Human), this protein is Small integral membrane protein 15 (SMIM15).